Consider the following 485-residue polypeptide: Putative phosphoethanolamine transferase HI_1064 (485 aa).

A run of 4 helical transmembrane segments spans residues 33–53 (ILPA…ILIG), 55–75 (GMFT…ILLL), 81–101 (SFYF…PTGL), and 125–145 (FLLQ…ILIF).

Belongs to the phosphoethanolamine transferase family.

The protein resides in the cell membrane. In Haemophilus influenzae (strain ATCC 51907 / DSM 11121 / KW20 / Rd), this protein is Putative phosphoethanolamine transferase HI_1064.